Consider the following 499-residue polypeptide: Bifunctional purine biosynthesis protein PurH (499 aa).

Residues 1–144 enclose the MGS-like domain; sequence MINRALISVY…KNFKDVIVVT (144 aa).

Belongs to the PurH family.

It catalyses the reaction (6R)-10-formyltetrahydrofolate + 5-amino-1-(5-phospho-beta-D-ribosyl)imidazole-4-carboxamide = 5-formamido-1-(5-phospho-D-ribosyl)imidazole-4-carboxamide + (6S)-5,6,7,8-tetrahydrofolate. The enzyme catalyses IMP + H2O = 5-formamido-1-(5-phospho-D-ribosyl)imidazole-4-carboxamide. It participates in purine metabolism; IMP biosynthesis via de novo pathway; 5-formamido-1-(5-phospho-D-ribosyl)imidazole-4-carboxamide from 5-amino-1-(5-phospho-D-ribosyl)imidazole-4-carboxamide (10-formyl THF route): step 1/1. It functions in the pathway purine metabolism; IMP biosynthesis via de novo pathway; IMP from 5-formamido-1-(5-phospho-D-ribosyl)imidazole-4-carboxamide: step 1/1. The polypeptide is Bifunctional purine biosynthesis protein PurH (Clostridium kluyveri (strain NBRC 12016)).